Reading from the N-terminus, the 154-residue chain is Anaerobic ribonucleoside-triphosphate reductase-activating protein (154 aa).

The [4Fe-4S] cluster site is built by C26, C30, and C33. Residues G32–Y34 and G74 each bind S-adenosyl-L-methionine.

Belongs to the organic radical-activating enzymes family. Forms a tetramer composed of two NrdD and two NrdG subunits. [4Fe-4S] cluster serves as cofactor.

Its subcellular location is the cytoplasm. The enzyme catalyses glycyl-[protein] + reduced [flavodoxin] + S-adenosyl-L-methionine = glycin-2-yl radical-[protein] + semiquinone [flavodoxin] + 5'-deoxyadenosine + L-methionine + H(+). In terms of biological role, activation of anaerobic ribonucleoside-triphosphate reductase under anaerobic conditions by generation of an organic free radical, using S-adenosylmethionine and reduced flavodoxin as cosubstrates to produce 5'-deoxy-adenosine. This is Anaerobic ribonucleoside-triphosphate reductase-activating protein (nrdG) from Salmonella typhi.